A 533-amino-acid chain; its full sequence is Dipeptide-binding protein (533 aa).

Positions M1–A24 are cleaved as a signal peptide.

The protein belongs to the bacterial solute-binding protein 5 family.

The protein localises to the periplasm. Binds different dipeptides. Probably bind only L-amino acid containing dipeptides. The sequence is that of Dipeptide-binding protein from Pseudomonas aeruginosa (strain ATCC 15692 / DSM 22644 / CIP 104116 / JCM 14847 / LMG 12228 / 1C / PRS 101 / PAO1).